Consider the following 469-residue polypeptide: Neuraminidase (469 aa).

At 1–9 the chain is on the intravirion side; sequence MNPNQKIIT. A helical membrane pass occupies residues 10-30; it reads IGSVSLTIATICFLMQIAILV. The tract at residues 11-33 is involved in apical transport and lipid raft association; sequence GSVSLTIATICFLMQIAILVTTV. Over 31 to 469 the chain is Virion surface; that stretch reads TTVTLHFKQY…DGADINLMPI (439 aa). Positions 36–88 are hypervariable stalk region; sequence HFKQYECSSPPNNQVIPCQPTIIERNITEIVYLTNTTIEKEICPKLVEYRNWS. 3 N-linked (GlcNAc...) asparagine; by host glycosylation sites follow: Asn-61, Asn-70, and Asn-86. A head of neuraminidase region spans residues 91–469; the sequence is QCKITGFAPF…DGADINLMPI (379 aa). Cystine bridges form between Cys-92/Cys-417, Cys-124/Cys-129, Cys-183/Cys-230, Cys-232/Cys-237, Cys-278/Cys-291, Cys-280/Cys-289, Cys-318/Cys-337, and Cys-421/Cys-447. Substrate is bound at residue Arg-118. Asn-146 is a glycosylation site (N-linked (GlcNAc...) asparagine; by host). Residue Asp-151 is the Proton donor/acceptor of the active site. Arg-152 is a binding site for substrate. Asn-200 and Asn-234 each carry an N-linked (GlcNAc...) asparagine; by host glycan. 276–277 contributes to the substrate binding site; it reads EE. Substrate is bound at residue Arg-292. 3 residues coordinate Ca(2+): Asp-293, Gly-297, and Asp-324. The interval 326–350 is disordered; it reads PRKNDSSSSSYCQNPNNEKGSHGVK. Asn-329 is a glycosylation site (N-linked (GlcNAc...) asparagine; by host). Residues 331–343 are compositionally biased toward polar residues; that stretch reads SSSSSYCQNPNNE. Arg-371 is a substrate binding site. Asn-402 is a glycosylation site (N-linked (GlcNAc...) asparagine; by host). Tyr-406 acts as the Nucleophile in catalysis.

Belongs to the glycosyl hydrolase 34 family. In terms of assembly, homotetramer. Ca(2+) serves as cofactor. Post-translationally, N-glycosylated.

The protein resides in the virion membrane. The protein localises to the host apical cell membrane. The catalysed reaction is Hydrolysis of alpha-(2-&gt;3)-, alpha-(2-&gt;6)-, alpha-(2-&gt;8)- glycosidic linkages of terminal sialic acid residues in oligosaccharides, glycoproteins, glycolipids, colominic acid and synthetic substrates.. Inhibited by the neuraminidase inhibitors zanamivir (Relenza) and oseltamivir (Tamiflu). These drugs interfere with the release of progeny virus from infected cells and are effective against all influenza strains. Resistance to neuraminidase inhibitors is quite rare. Its function is as follows. Catalyzes the removal of terminal sialic acid residues from viral and cellular glycoconjugates. Cleaves off the terminal sialic acids on the glycosylated HA during virus budding to facilitate virus release. Additionally helps virus spread through the circulation by further removing sialic acids from the cell surface. These cleavages prevent self-aggregation and ensure the efficient spread of the progeny virus from cell to cell. Otherwise, infection would be limited to one round of replication. Described as a receptor-destroying enzyme because it cleaves a terminal sialic acid from the cellular receptors. May facilitate viral invasion of the upper airways by cleaving the sialic acid moieties on the mucin of the airway epithelial cells. Likely to plays a role in the budding process through its association with lipid rafts during intracellular transport. May additionally display a raft-association independent effect on budding. Plays a role in the determination of host range restriction on replication and virulence. Sialidase activity in late endosome/lysosome traffic seems to enhance virus replication. This Influenza A virus (strain A/Kitakyushu/159/1993 H3N2) protein is Neuraminidase.